The chain runs to 394 residues: Venom metalloproteinase antarease-like TtrivMP_A (394 aa).

Positions 1 to 16 (MISYLASIFLLATVSA) are cleaved as a signal peptide. Positions 17 to 158 (VPSGRVEVVF…AENVSRMAEE (142 aa)) are excised as a propeptide. An N-linked (GlcNAc...) asparagine glycan is attached at N151. Positions 162–390 (IVVEYYIVTD…KPTAFCIFEQ (229 aa)) constitute a Peptidase M12B domain. The cysteines at positions 295 and 386 are disulfide-linked. Position 319 (H319) interacts with Zn(2+). E320 is an active-site residue. Zn(2+) contacts are provided by H323 and H329.

It belongs to the venom metalloproteinase (M12B) family. Zn(2+) is required as a cofactor. In terms of tissue distribution, expressed by the venom gland.

It localises to the secreted. With respect to regulation, inhibited by EDTA. Its function is as follows. Acts as a metalloprotease. Penetrates intact tissue and specifically cleaves the vesicle-associated membrane protein 2 (VAMP2) (part of the SNARE complex) involved in pancreatic secretion, thus disrupting the normal vesicular traffic. The polypeptide is Venom metalloproteinase antarease-like TtrivMP_A (Tityus trivittatus (Argentinean scorpion)).